Reading from the N-terminus, the 268-residue chain is Undecaprenyl-diphosphatase (268 aa).

8 helical membrane-spanning segments follow: residues 9-29 (VILGVVEGVTEFLPVSSTGHL), 47-67 (FDVLIQLGAILAILALYFAKL), 83-103 (FIIGVLVAFLPAAVIGAAAGS), 107-127 (LFLFNPWVVCFSLIVGGAVLL), 144-164 (FPVLMYFYIGCAQCVAMIPGV), 184-204 (AAEFSFFLAIPTMVGAFVYDL), 218-238 (IVAVGFVVSFITAIIVVKTFL), and 246-266 (FQLFAWWRVVVGTLGLIALAM).

It belongs to the UppP family.

It is found in the cell inner membrane. The enzyme catalyses di-trans,octa-cis-undecaprenyl diphosphate + H2O = di-trans,octa-cis-undecaprenyl phosphate + phosphate + H(+). In terms of biological role, catalyzes the dephosphorylation of undecaprenyl diphosphate (UPP). Confers resistance to bacitracin. This is Undecaprenyl-diphosphatase from Rhodopseudomonas palustris (strain HaA2).